Reading from the N-terminus, the 364-residue chain is Ferrochelatase (364 aa).

Fe cation is bound by residues His-213 and Glu-294.

It belongs to the ferrochelatase family.

Its subcellular location is the cytoplasm. The enzyme catalyses heme b + 2 H(+) = protoporphyrin IX + Fe(2+). The protein operates within porphyrin-containing compound metabolism; protoheme biosynthesis; protoheme from protoporphyrin-IX: step 1/1. Its function is as follows. Catalyzes the ferrous insertion into protoporphyrin IX. The polypeptide is Ferrochelatase (Chromobacterium violaceum (strain ATCC 12472 / DSM 30191 / JCM 1249 / CCUG 213 / NBRC 12614 / NCIMB 9131 / NCTC 9757 / MK)).